We begin with the raw amino-acid sequence, 602 residues long: Elongation factor 4 (602 aa).

A tr-type G domain is found at 6 to 188 (DRIRNFCIIA…RIVRDVPPPG (183 aa)). GTP contacts are provided by residues 18–23 (DHGKST) and 135–138 (NKID).

It belongs to the TRAFAC class translation factor GTPase superfamily. Classic translation factor GTPase family. LepA subfamily.

It localises to the cell membrane. The catalysed reaction is GTP + H2O = GDP + phosphate + H(+). Its function is as follows. Required for accurate and efficient protein synthesis under certain stress conditions. May act as a fidelity factor of the translation reaction, by catalyzing a one-codon backward translocation of tRNAs on improperly translocated ribosomes. Back-translocation proceeds from a post-translocation (POST) complex to a pre-translocation (PRE) complex, thus giving elongation factor G a second chance to translocate the tRNAs correctly. Binds to ribosomes in a GTP-dependent manner. The polypeptide is Elongation factor 4 (Desulforudis audaxviator (strain MP104C)).